The sequence spans 281 residues: N-acetyltransferase ECO1 (281 aa).

The segment at 33-57 adopts a CCHH-type zinc-finger fold; sequence VKCDKCEMSYSSTSIEDRAIHEKYH. The segment at 86–105 is disordered; it reads LSRSTGTITPLNSSPLKKSS. Residues 95-105 are compositionally biased toward low complexity; that stretch reads PLNSSPLKKSS. An N6-acetyllysine; by autocatalysis modification is found at lysine 223.

The protein belongs to the acetyltransferase family. ECO subfamily. In terms of assembly, binds specifically to CHL12, RFC1, RFC2, RFC3, RFC4, RFC5 and RAD24 when members of an RFC complex. Interacts with CHL1 and MPS3. Post-translationally, autoacetylates in vitro.

The protein localises to the nucleus. In terms of biological role, required for establishment of sister chromatid cohesion during S phase but not for its further maintenance during G2 or M phases or for loading the cohesin complex onto DNA. Interacts with the three known alternate replication factor C (RFC) complexes, suggesting that these complexes have essential but redundant activity in cohesion establishment. Acts by acetylating the cohesin complex component SMC3. In vitro, possesses acetyltransferase activity where it can acetylate itself and components of the cohesin complex (MCD1, IRR1 and PDS5), but is unable to acetylate histones. This is N-acetyltransferase ECO1 (ECO1) from Saccharomyces cerevisiae (strain ATCC 204508 / S288c) (Baker's yeast).